The chain runs to 270 residues: MTHLLGVVGDPVAHSLSPFIHNGWLRAHQIDAVYSAFEVKAGELVSGLQSLSSQGVIGLNVTLPHKEEAMRLATSVSGTAHRLGAVNFLVRREDGWIGDNTDAPGFGLTLDFGDIEVSGRNVFLLGAGGSARAVASVLADRGARLTICNRTVGRAEDLARDLAPGARVRSLDEGLRKLSSAALVVNTLSLGHSGGRLELPPSAGGIFYDISYGKGAEAALKEAREKGWRALDGLGMLVAQAAISFEHWFGIKPDMAEAHARCRKLVEATS.

Residues 15-17 and Thr62 each bind shikimate; that span reads SLS. Residue Lys66 is the Proton acceptor of the active site. 2 residues coordinate shikimate: Asn87 and Asp102. NADP(+) is bound by residues 126–130, 149–154, and Ile210; these read GAGGS and NRTVGR. Residue Tyr212 coordinates shikimate. Gly233 is a binding site for NADP(+).

It belongs to the shikimate dehydrogenase family. In terms of assembly, homodimer.

It carries out the reaction shikimate + NADP(+) = 3-dehydroshikimate + NADPH + H(+). It participates in metabolic intermediate biosynthesis; chorismate biosynthesis; chorismate from D-erythrose 4-phosphate and phosphoenolpyruvate: step 4/7. Involved in the biosynthesis of the chorismate, which leads to the biosynthesis of aromatic amino acids. Catalyzes the reversible NADPH linked reduction of 3-dehydroshikimate (DHSA) to yield shikimate (SA). The sequence is that of Shikimate dehydrogenase (NADP(+)) from Hyphomonas neptunium (strain ATCC 15444).